A 186-amino-acid polypeptide reads, in one-letter code: Alkyl hydroperoxide reductase AhpD (186 aa).

The active-site Proton donor is Cys132. An intrachain disulfide couples Cys132 to Cys135. The active-site Cysteine sulfenic acid (-SOH) intermediate is Cys135.

This sequence belongs to the AhpD family.

It catalyses the reaction N(6)-[(R)-dihydrolipoyl]-L-lysyl-[lipoyl-carrier protein] + a hydroperoxide = N(6)-[(R)-lipoyl]-L-lysyl-[lipoyl-carrier protein] + an alcohol + H2O. In terms of biological role, antioxidant protein with alkyl hydroperoxidase activity. Required for the reduction of the AhpC active site cysteine residues and for the regeneration of the AhpC enzyme activity. The polypeptide is Alkyl hydroperoxide reductase AhpD (Anaeromyxobacter dehalogenans (strain 2CP-C)).